The primary structure comprises 257 residues: Auxin-responsive protein IAA17 (257 aa).

Disordered stretches follow at residues 1–51 and 85–119; these read MSPP…PAAT and GKKA…QVVG. Positions 33–37 match the EAR-like (transcriptional repression) motif; it reads LRLGL. The span at 105 to 118 shows a compositional bias: low complexity; the sequence is AAAPQAPAAKAQVV. The PB1 domain occupies 151 to 239; sequence FLYVKVSMDG…SCRRLRIMKG (89 aa).

This sequence belongs to the Aux/IAA family. As to quaternary structure, homodimers and heterodimers. Highly expressed in etiolated seedlings and flowers. Expressed in roots and green seedlings.

The protein resides in the nucleus. In terms of biological role, aux/IAA proteins are short-lived transcriptional factors that function as repressors of early auxin response genes at low auxin concentrations. This is Auxin-responsive protein IAA17 (IAA17) from Oryza sativa subsp. japonica (Rice).